Here is an 884-residue protein sequence, read N- to C-terminus: Valine--tRNA ligase (884 aa).

The 'HIGH' region signature appears at 47-57 (PNVTGALHIGH). The 'KMSKS' region signature appears at 525–529 (KMSKS). Lysine 528 is a binding site for ATP. Positions 812-884 (AVDFEAELAR…QQRFRDAIGK (73 aa)) form a coiled coil.

It belongs to the class-I aminoacyl-tRNA synthetase family. ValS type 1 subfamily. As to quaternary structure, monomer.

The protein resides in the cytoplasm. It carries out the reaction tRNA(Val) + L-valine + ATP = L-valyl-tRNA(Val) + AMP + diphosphate. In terms of biological role, catalyzes the attachment of valine to tRNA(Val). As ValRS can inadvertently accommodate and process structurally similar amino acids such as threonine, to avoid such errors, it has a 'posttransfer' editing activity that hydrolyzes mischarged Thr-tRNA(Val) in a tRNA-dependent manner. The sequence is that of Valine--tRNA ligase from Nitratidesulfovibrio vulgaris (strain ATCC 29579 / DSM 644 / CCUG 34227 / NCIMB 8303 / VKM B-1760 / Hildenborough) (Desulfovibrio vulgaris).